A 401-amino-acid polypeptide reads, in one-letter code: Multidrug resistance protein MdtA (401 aa).

Residues 1–20 form the signal peptide; it reads MNQNNKHRTLLFRAALAAIA.

Belongs to the membrane fusion protein (MFP) (TC 8.A.1) family. In terms of assembly, part of a tripartite efflux system composed of MdtA, MdtB and MdtC.

The protein localises to the cell inner membrane. This chain is Multidrug resistance protein MdtA, found in Photorhabdus laumondii subsp. laumondii (strain DSM 15139 / CIP 105565 / TT01) (Photorhabdus luminescens subsp. laumondii).